A 383-amino-acid chain; its full sequence is Acetylornithine deacetylase (383 aa).

Histidine 80 lines the Zn(2+) pocket. Aspartate 82 is an active-site residue. Aspartate 112 lines the Zn(2+) pocket. Glutamate 144 is a catalytic residue. Positions 145, 169, and 355 each coordinate Zn(2+).

The protein belongs to the peptidase M20A family. ArgE subfamily. As to quaternary structure, homodimer. Requires Zn(2+) as cofactor. It depends on Co(2+) as a cofactor. Glutathione is required as a cofactor.

The protein resides in the cytoplasm. The catalysed reaction is N(2)-acetyl-L-ornithine + H2O = L-ornithine + acetate. It functions in the pathway amino-acid biosynthesis; L-arginine biosynthesis; L-ornithine from N(2)-acetyl-L-ornithine (linear): step 1/1. In terms of biological role, catalyzes the hydrolysis of the amide bond of N(2)-acetylated L-amino acids. Cleaves the acetyl group from N-acetyl-L-ornithine to form L-ornithine, an intermediate in L-arginine biosynthesis pathway, and a branchpoint in the synthesis of polyamines. In Erwinia tasmaniensis (strain DSM 17950 / CFBP 7177 / CIP 109463 / NCPPB 4357 / Et1/99), this protein is Acetylornithine deacetylase.